The chain runs to 153 residues: Movement protein (153 aa).

The interval 107–153 is disordered; sequence SSSARPLPQQPAPSLTSWTPIAKHLHSHQQSISSQSPKLVRGASQRR.

It belongs to the luteoviruses movement protein family.

In terms of biological role, transports viral genome to neighboring plant cells directly through plasmosdesmata, without any budding. The movement protein allows efficient cell to cell propagation, by bypassing the host cell wall barrier. This is Movement protein from Avena byzantina (Oat).